The following is a 307-amino-acid chain: Leucine-rich repeat-containing protein 25 (307 aa).

A signal peptide spans 1–20 (MGGPLMWALLLPLLLHQAGS). The Extracellular segment spans residues 21–168 (QTSSCSVLSG…SCPSGLTKIA (148 aa)). Asn-44 and Asn-56 each carry an N-linked (GlcNAc...) asparagine glycan. LRR repeat units lie at residues 63-86 (SVQLLDLSANGLQRLPWSFFRDLE) and 87-110 (QLQLLIVTNNSLDFVDRALXXXGC). N-linked (GlcNAc...) asparagine glycosylation is found at Asn-95, Asn-132, and Asn-151. The helical transmembrane segment at 169 to 189 (IGALAASGSLLLVLAIAGPVL) threads the bilayer. Residues 190–307 (AWRFCRHRMD…DDEEYVVPGR (118 aa)) lie on the Cytoplasmic side of the membrane. Positions 205 to 249 (TWASQDGSRSGSGRQPRYSSQGRRPKSPANTPPRSSTPDYENVFV) are disordered. A compositionally biased stretch (low complexity) spans 211-226 (GSRSGSGRQPRYSSQG). Residues 232 to 243 (PANTPPRSSTPD) are compositionally biased toward polar residues. Position 286 is a phosphotyrosine (Tyr-286).

Interacts with RIGI. Interacts with SQSTM1. Interacts with p65/RELA; this interaction promotes the degradation of RELA through autophagy.

The protein resides in the membrane. It is found in the cytoplasm. In terms of biological role, plays a role in the inhibition of RLR-mediated type I interferon signaling pathway by targeting RIGI for autophagic degradation. Interacts specifically with ISG15-associated RIGI to promote interaction between RIGI and the autophagic cargo receptor p62/SQSTM1 to mediate RIGI degradation via selective autophagy. Plays also a role in the inhibition of NF-kappa-B signaling pathway and inflammatory response by promoting the degradation of p65/RELA. This is Leucine-rich repeat-containing protein 25 (LRRC25) from Bos taurus (Bovine).